A 410-amino-acid polypeptide reads, in one-letter code: Peptidase T (410 aa).

His-79 serves as a coordination point for Zn(2+). Residue Asp-81 is part of the active site. Asp-142 lines the Zn(2+) pocket. Glu-176 functions as the Proton acceptor in the catalytic mechanism. Residues Glu-177, Asp-199, and His-381 each contribute to the Zn(2+) site.

This sequence belongs to the peptidase M20B family. It depends on Zn(2+) as a cofactor.

The protein resides in the cytoplasm. The enzyme catalyses Release of the N-terminal residue from a tripeptide.. In terms of biological role, cleaves the N-terminal amino acid of tripeptides. This is Peptidase T from Listeria monocytogenes serotype 4b (strain CLIP80459).